We begin with the raw amino-acid sequence, 175 residues long: Disulfide bond formation protein B (175 aa).

At 1–13 (MSKLVTFSQQRSA) the chain is on the cytoplasmic side. Residues 14–30 (WLILMFSALGLEASALY) form a helical membrane-spanning segment. At 31-48 (FQYVMLLDPCVMCIYIRV) the chain is on the periplasmic side. An intrachain disulfide couples Cys-40 to Cys-43. Residues 49 to 64 (AVLGLILAGLVGSIAP) form a helical membrane-spanning segment. Residues 65–71 (RFWIVRF) are Cytoplasmic-facing. A helical transmembrane segment spans residues 72-89 (LGMSLWGVSSAWGAKLSF). At 90-144 (ELYQMQANPSPFSTCSFYPEFPTWMPLDAWMPSIFMPTGMCSDIPWTMMSLSMTQ) the chain is on the periplasmic side. An intrachain disulfide couples Cys-104 to Cys-130. A helical transmembrane segment spans residues 145–163 (WTLIAFVGYSIAFLLFIYP). Residues 164–175 (GLLYKKPTNPYS) are Cytoplasmic-facing.

This sequence belongs to the DsbB family.

The protein localises to the cell inner membrane. Functionally, required for disulfide bond formation in some periplasmic proteins. Acts by oxidizing the DsbA protein. This is Disulfide bond formation protein B from Shewanella denitrificans (strain OS217 / ATCC BAA-1090 / DSM 15013).